We begin with the raw amino-acid sequence, 222 residues long: UPF0502 protein Shewmr4_1554 (222 aa).

A compositionally biased stretch (polar residues) spans 175–193 (SLSADSPSAGSNSLNAQDR). The interval 175 to 194 (SLSADSPSAGSNSLNAQDRQ) is disordered.

Belongs to the UPF0502 family.

This Shewanella sp. (strain MR-4) protein is UPF0502 protein Shewmr4_1554.